A 310-amino-acid polypeptide reads, in one-letter code: D-alanyl-D-alanine endopeptidase (310 aa).

A signal peptide spans 1 to 25; the sequence is MPKFRVSLFSLALMLAVPFAPQAVA. The active-site Acyl-ester intermediate is the Ser-67. The active-site Proton acceptor is Lys-70. The active site involves Ser-124. Lys-231 contacts substrate.

Belongs to the peptidase S11 family. Post-translationally, pbp8 is a proteolytic product of Pbp7.

The protein resides in the periplasm. Cell wall formation. May play a specialized role in remodeling the cell wall. Specifically hydrolyzes the DD-diaminopimelate-alanine bonds in high-molecular-mass murein sacculi. The chain is D-alanyl-D-alanine endopeptidase (pbpG) from Escherichia coli (strain K12).